The sequence spans 61 residues: Small ribosomal subunit protein uS14 (61 aa).

4 residues coordinate Zn(2+): Cys24, Cys27, Cys40, and Cys43.

It belongs to the universal ribosomal protein uS14 family. Zinc-binding uS14 subfamily. Part of the 30S ribosomal subunit. Contacts proteins S3 and S10. Requires Zn(2+) as cofactor.

In terms of biological role, binds 16S rRNA, required for the assembly of 30S particles and may also be responsible for determining the conformation of the 16S rRNA at the A site. The sequence is that of Small ribosomal subunit protein uS14 from Mycoplasmopsis pulmonis (strain UAB CTIP) (Mycoplasma pulmonis).